Here is a 258-residue protein sequence, read N- to C-terminus: GTP cyclohydrolase FolE2 (258 aa).

Belongs to the GTP cyclohydrolase IV family.

The enzyme catalyses GTP + H2O = 7,8-dihydroneopterin 3'-triphosphate + formate + H(+). It participates in cofactor biosynthesis; 7,8-dihydroneopterin triphosphate biosynthesis; 7,8-dihydroneopterin triphosphate from GTP: step 1/1. Converts GTP to 7,8-dihydroneopterin triphosphate. The polypeptide is GTP cyclohydrolase FolE2 (Lawsonia intracellularis (strain PHE/MN1-00)).